A 374-amino-acid chain; its full sequence is Chaperone protein DnaJ (374 aa).

The 66-residue stretch at 5-70 (DYYEVLGISR…SKRAAYDQFG (66 aa)) folds into the J domain. A CR-type zinc finger spans residues 129-207 (GKTVKINIPG…CHGQGRVRQE (79 aa)). Zn(2+) is bound by residues Cys-142, Cys-145, Cys-159, Cys-162, Cys-181, Cys-184, Cys-195, and Cys-198. CXXCXGXG motif repeat units follow at residues 142 to 149 (CEACDGSG), 159 to 166 (CGTCQGMG), 181 to 188 (CPTCRGSG), and 195 to 202 (CKSCHGQG). The disordered stretch occupies residues 216-238 (PGVDTGDRIRLSGEGEMGVDGGP).

Belongs to the DnaJ family. Homodimer. Zn(2+) is required as a cofactor.

The protein localises to the cytoplasm. In terms of biological role, participates actively in the response to hyperosmotic and heat shock by preventing the aggregation of stress-denatured proteins and by disaggregating proteins, also in an autonomous, DnaK-independent fashion. Unfolded proteins bind initially to DnaJ; upon interaction with the DnaJ-bound protein, DnaK hydrolyzes its bound ATP, resulting in the formation of a stable complex. GrpE releases ADP from DnaK; ATP binding to DnaK triggers the release of the substrate protein, thus completing the reaction cycle. Several rounds of ATP-dependent interactions between DnaJ, DnaK and GrpE are required for fully efficient folding. Also involved, together with DnaK and GrpE, in the DNA replication of plasmids through activation of initiation proteins. The protein is Chaperone protein DnaJ of Marinobacter nauticus (strain ATCC 700491 / DSM 11845 / VT8) (Marinobacter aquaeolei).